The primary structure comprises 341 residues: DNA-directed RNA polymerase subunit alpha (341 aa).

The interval 1-237 (MLSLSKNWNA…EQLQLFISFE (237 aa)) is alpha N-terminal domain (alpha-NTD). Residues 252-341 (FSPYLLKRVD…LSKRYEDSYN (90 aa)) form an alpha C-terminal domain (alpha-CTD) region.

Belongs to the RNA polymerase alpha chain family. In terms of assembly, homodimer. The RNAP catalytic core consists of 2 alpha, 1 beta, 1 beta' and 1 omega subunit. When a sigma factor is associated with the core the holoenzyme is formed, which can initiate transcription.

It carries out the reaction RNA(n) + a ribonucleoside 5'-triphosphate = RNA(n+1) + diphosphate. Functionally, DNA-dependent RNA polymerase catalyzes the transcription of DNA into RNA using the four ribonucleoside triphosphates as substrates. The sequence is that of DNA-directed RNA polymerase subunit alpha from Rickettsia bellii (strain OSU 85-389).